The chain runs to 797 residues: Ent-atiserene synthase KSL1, chloroplastic (797 aa).

A chloroplast-targeting transit peptide spans Leu-1–Met-48. Residues Ser-21–Gly-32 show a composition bias toward low complexity. The disordered stretch occupies residues Ser-21–Pro-47. Mg(2+)-binding residues include Asp-547, Asp-551, Asn-691, and Glu-699. Residues Asp-547–Asp-551 carry the DDXXD motif motif.

Belongs to the terpene synthase family. It depends on Mg(2+) as a cofactor.

It is found in the plastid. It localises to the chloroplast. The enzyme catalyses ent-copalyl diphosphate = ent-atiserene + diphosphate. It functions in the pathway secondary metabolite biosynthesis; terpenoid biosynthesis. Functionally, involved in the biosynthesis of ent-kaurene diterpenoids natural products such as oridonin, miltiradiene, eriocalyxin B and nezukol, known to exhibit antitumor, anti-inflammatory and antibacterial activities. Catalyzes the conversion of ent-copalyl diphosphate (ent-CPP) to ent-atiserene. The sequence is that of Ent-atiserene synthase KSL1, chloroplastic from Isodon japonicus (Scutellaria japonica).